We begin with the raw amino-acid sequence, 331 residues long: Lipoyl synthase (331 aa).

The tract at residues 1-33 is disordered; sequence MSDALIATSSEAPQSPAEQYDPTRKQKSADKTA. Polar residues predominate over residues 7–17; the sequence is ATSSEAPQSPA. Positions 21–33 are enriched in basic and acidic residues; sequence DPTRKQKSADKTA. [4Fe-4S] cluster is bound by residues Cys78, Cys83, Cys89, Cys104, Cys108, Cys111, and Ser318. In terms of domain architecture, Radical SAM core spans 89–307; it reads CFGKGTATFM…EEEAYKMGFT (219 aa).

It belongs to the radical SAM superfamily. Lipoyl synthase family. It depends on [4Fe-4S] cluster as a cofactor.

It localises to the cytoplasm. The catalysed reaction is [[Fe-S] cluster scaffold protein carrying a second [4Fe-4S](2+) cluster] + N(6)-octanoyl-L-lysyl-[protein] + 2 oxidized [2Fe-2S]-[ferredoxin] + 2 S-adenosyl-L-methionine + 4 H(+) = [[Fe-S] cluster scaffold protein] + N(6)-[(R)-dihydrolipoyl]-L-lysyl-[protein] + 4 Fe(3+) + 2 hydrogen sulfide + 2 5'-deoxyadenosine + 2 L-methionine + 2 reduced [2Fe-2S]-[ferredoxin]. It participates in protein modification; protein lipoylation via endogenous pathway; protein N(6)-(lipoyl)lysine from octanoyl-[acyl-carrier-protein]: step 2/2. Catalyzes the radical-mediated insertion of two sulfur atoms into the C-6 and C-8 positions of the octanoyl moiety bound to the lipoyl domains of lipoate-dependent enzymes, thereby converting the octanoylated domains into lipoylated derivatives. This is Lipoyl synthase from Cupriavidus necator (strain ATCC 17699 / DSM 428 / KCTC 22496 / NCIMB 10442 / H16 / Stanier 337) (Ralstonia eutropha).